The chain runs to 310 residues: Aspartate carbamoyltransferase catalytic subunit (310 aa).

Arginine 58 and threonine 59 together coordinate carbamoyl phosphate. Residue lysine 86 coordinates L-aspartate. Residues arginine 108, histidine 136, and glutamine 139 each contribute to the carbamoyl phosphate site. Positions 169 and 224 each coordinate L-aspartate. Carbamoyl phosphate is bound by residues glycine 265 and proline 266.

The protein belongs to the aspartate/ornithine carbamoyltransferase superfamily. ATCase family. Heterododecamer (2C3:3R2) of six catalytic PyrB chains organized as two trimers (C3), and six regulatory PyrI chains organized as three dimers (R2).

The enzyme catalyses carbamoyl phosphate + L-aspartate = N-carbamoyl-L-aspartate + phosphate + H(+). Its pathway is pyrimidine metabolism; UMP biosynthesis via de novo pathway; (S)-dihydroorotate from bicarbonate: step 2/3. In terms of biological role, catalyzes the condensation of carbamoyl phosphate and aspartate to form carbamoyl aspartate and inorganic phosphate, the committed step in the de novo pyrimidine nucleotide biosynthesis pathway. In Trichlorobacter lovleyi (strain ATCC BAA-1151 / DSM 17278 / SZ) (Geobacter lovleyi), this protein is Aspartate carbamoyltransferase catalytic subunit.